The chain runs to 185 residues: Putative manganese efflux pump MntP (185 aa).

6 helical membrane passes run 3–23, 40–60, 64–84, 102–122, 124–144, and 165–185; these read IFTL…VSLA, LLFV…VSVI, FDAY…LRMI, TFSR…AVGI, LSLA…FVLI, and EIFG…DAMM.

This sequence belongs to the MntP (TC 9.B.29) family.

It localises to the cell inner membrane. Functionally, probably functions as a manganese efflux pump. This is Putative manganese efflux pump MntP from Elusimicrobium minutum (strain Pei191).